The following is a 509-amino-acid chain: Hexokinase-4, chloroplastic (509 aa).

Residues 1–37 (MSAAAAIASPIPAAIAVVQQQRRGRSRGGGSGAAAVR) constitute a chloroplast transit peptide. The Hexokinase domain maps to 45-496 (SAIAPILADL…SGIGAALLAA (452 aa)). Residues 100–238 (TGNETGLFYA…GLDMRVSALV (139 aa)) are hexokinase small subdomain. Residues Gly114, Thr115, and Asn116 each contribute to the ADP site. 4 residues coordinate D-glucose: Thr204, Lys205, Asn239, and Asp240. The segment at 239–485 (NDTVGTLAGA…NRIAIEHTKD (247 aa)) is hexokinase large subdomain. Thr263 is a binding site for ADP. Residues Asn266, Glu294, and Glu324 each coordinate D-glucose. Residue Gly450 participates in ADP binding.

The protein belongs to the hexokinase family. Expressed in roots, leaves, flowers, immature seeds, endosperm and seed coat.

It localises to the plastid. The protein localises to the chloroplast stroma. The catalysed reaction is a D-hexose + ATP = a D-hexose 6-phosphate + ADP + H(+). It carries out the reaction D-fructose + ATP = D-fructose 6-phosphate + ADP + H(+). It catalyses the reaction D-glucose + ATP = D-glucose 6-phosphate + ADP + H(+). The protein operates within carbohydrate metabolism; hexose metabolism. It participates in carbohydrate degradation; glycolysis; D-glyceraldehyde 3-phosphate and glycerone phosphate from D-glucose: step 1/4. Its function is as follows. Fructose and glucose phosphorylating enzyme. This is Hexokinase-4, chloroplastic (HXK4) from Oryza sativa subsp. japonica (Rice).